A 359-amino-acid chain; its full sequence is Protein Wnt-5a (359 aa).

The signal sequence occupies residues 1-20 (MATTHLTAALALLCALLQVD). A disulfide bond links Cys-83 and Cys-94. 2 N-linked (GlcNAc...) asparagine glycosylation sites follow: Asn-93 and Asn-99. 10 disulfides stabilise this stretch: Cys-133/Cys-141, Cys-143/Cys-161, Cys-217/Cys-231, Cys-219/Cys-226, Cys-288/Cys-319, Cys-304/Cys-314, Cys-318/Cys-358, Cys-334/Cys-349, Cys-336/Cys-346, and Cys-341/Cys-342. Residue Ser-223 is the site of O-palmitoleoyl serine; by PORCN attachment. 2 N-linked (GlcNAc...) asparagine glycosylation sites follow: Asn-291 and Asn-305.

It belongs to the Wnt family. Palmitoleoylation is required for efficient binding to frizzled receptors. Depalmitoleoylation leads to Wnt signaling pathway inhibition. As to expression, neuroectodermal and non-neuroectodermal tissues.

It localises to the secreted. The protein localises to the extracellular space. Its subcellular location is the extracellular matrix. Its function is as follows. Ligand for members of the frizzled family of seven transmembrane receptors. Can activate or inhibit canonical Wnt signaling, depending on receptor context. Required during embryogenesis for extension of the primary anterior-posterior axis. The polypeptide is Protein Wnt-5a (WNT-5A) (Ambystoma mexicanum (Axolotl)).